Consider the following 269-residue polypeptide: Undecaprenyl-diphosphatase (269 aa).

Transmembrane regions (helical) follow at residues 40–59 (GITFDVALHLGTLIALALYF), 87–107 (WYIIAGCVPAAIVGKTLEEPI), 116–136 (AIIAAFLIGFGLLLALADTLG), 160–180 (ALLPGVSRSGITITAALFLGF), 188–208 (FSFLLSLPIVAGAALLKVGHL), 220–240 (PLLIGVGVSAVFGYVSVALLL), and 247–267 (SLYPFVWYRLLAGAGVLLFIF).

Belongs to the UppP family.

Its subcellular location is the cell inner membrane. The enzyme catalyses di-trans,octa-cis-undecaprenyl diphosphate + H2O = di-trans,octa-cis-undecaprenyl phosphate + phosphate + H(+). Its function is as follows. Catalyzes the dephosphorylation of undecaprenyl diphosphate (UPP). Confers resistance to bacitracin. The sequence is that of Undecaprenyl-diphosphatase from Geobacter metallireducens (strain ATCC 53774 / DSM 7210 / GS-15).